Consider the following 138-residue polypeptide: Protein FAM136A (138 aa).

An N-acetylalanine modification is found at Ala2. A phosphothreonine mark is found at Thr124 and Thr126.

This sequence belongs to the FAM136 family.

The polypeptide is Protein FAM136A (Fam136a) (Rattus norvegicus (Rat)).